A 350-amino-acid polypeptide reads, in one-letter code: Inhibin beta E chain (350 aa).

The N-terminal stretch at 1–21 is a signal peptide; the sequence is MGLSNVQLWTILLWALAWVQS. The propeptide occupies 22–236; the sequence is TRSACPSCGA…EPGAGRARRR (215 aa). A glycan (N-linked (GlcNAc...) asparagine) is linked at Asn-198. 4 disulfide bridges follow: Cys-240–Cys-248, Cys-247–Cys-315, Cys-276–Cys-347, and Cys-280–Cys-349.

The protein belongs to the TGF-beta family. In terms of assembly, homodimeric or heterodimeric through association with alpha and beta subunits, linked by one or more disulfide bonds. Inhibins are heterodimers of one alpha and one beta subunit. Activins are homo- or heterodimers of beta subunits only.

Its subcellular location is the secreted. Its function is as follows. Inhibins and activins inhibit and activate, respectively, the secretion of follitropin by the pituitary gland. Inhibins/activins are involved in regulating a number of diverse functions such as hypothalamic and pituitary hormone secretion, gonadal hormone secretion, germ cell development and maturation, erythroid differentiation, insulin secretion, nerve cell survival, embryonic axial development or bone growth, depending on their subunit composition. Inhibins appear to oppose the functions of activins. In terms of biological role, activin E is a homodimer of INHBE secreted by the liver that plays a crucial role in regulating metabolic homeostasis particularly in lipid metabolism and energy homeostasis. Plays a central role in the regulation of adipose tissue lipolysis by preventing the influx of fatty acids from adipose tissue into the liver. Mechanistically, signals via ACVR1C to activate SMAD2/3 signaling, suppressing PPARG target genes in adipose tissue, thereby reducing liver lipid content and improving glycemic control. Induces beige adipocyte formation and thermogenesis in response to cold exposure. The polypeptide is Inhibin beta E chain (Inhbe) (Rattus norvegicus (Rat)).